The following is a 308-amino-acid chain: Growth/differentiation factor 15 (308 aa).

The signal sequence occupies residues 1–29; it reads MPGQELRTVNGSQMLLVLLVLSWLPHGGA. Residues 30–194 constitute a propeptide that is removed on maturation; it reads LSLAEASRAS…RPQAARGRRR (165 aa). A glycan (N-linked (GlcNAc...) asparagine) is linked at N70. The disordered stretch occupies residues 152–177; that stretch reads APALHLRLSPPPSQSDQLLAESSSAR. Residues 165–177 show a composition bias toward polar residues; the sequence is QSDQLLAESSSAR. 4 cysteine pairs are disulfide-bonded: C203–C210, C211–C274, C240–C305, and C244–C307.

This sequence belongs to the TGF-beta family. Homodimer; disulfide-linked. Interacts with GFRAL and RET; ligand of GFRAL, which mediates GDF15 internalization and cellular signaling through interaction with RET via the formation of a 2:2:2 ternary complex composed of GDF15, GFRAL and RET. Detected in plasma (at protein level). Highly expressed in placenta, with lower levels in prostate and colon and some expression in kidney.

The protein localises to the secreted. In terms of biological role, hormone produced in response to various stresses to confer information about those stresses to the brain, and trigger an aversive response, characterized by nausea, vomiting, and/or loss of appetite. The aversive response is both required to reduce continuing exposure to those stresses at the time of exposure and to promote avoidance behavior in the future. Acts by binding to its receptor, GFRAL, activating GFRAL-expressing neurons localized in the area postrema and nucleus tractus solitarius of the brainstem. It then triggers the activation of neurons localized within the parabrachial nucleus and central amygdala, which constitutes part of the 'emergency circuit' that shapes responses to stressful conditions. The GDF15-GFRAL signal induces expression of genes involved in metabolism, such as lipid metabolism in adipose tissues. Required for avoidance behavior in response to food allergens: induced downstream of mast cell activation to promote aversion and minimize harmful effects of exposure to noxious substances. In addition to suppress appetite, also promotes weight loss by enhancing energy expenditure in muscle: acts by increasing calcium futile cycling in muscle. Contributes to the effect of metformin, an anti-diabetic drug, on appetite reduction and weight loss: produced in the kidney in response to metformin treatment, thereby activating the GDF15-GFRAL response, leading to reduced appetite and weight. The contribution of GDF15 to weight loss following metformin treatment is however limited and subject to discussion. Produced in response to anticancer drugs, such as camptothecin or cisplatin, promoting nausea, vomiting and contributing to malnutrition. Overproduced in many cancers, promoting anorexia in cancer (cachexia). Responsible for the risk of nausea and vomiting during pregnancy: high levels of GDF15 during pregnancy, mostly originating from the fetus, are associated with increased nausea and vomiting. Maternal sensitivity to nausea is probably determined by pre-pregnancy exposure to GDF15, women with naturally high level of GDF15 being less susceptible to nausea than women with low levels of GDF15 before pregnancy. Promotes metabolic adaptation in response to systemic inflammation caused by bacterial and viral infections in order to promote tissue tolerance and prevent tissue damage. Required for tissue tolerance in response to myocardial infarction by acting as an inhibitor of leukocyte integring activation, thereby protecting against cardiac rupture. Inhibits growth hormone signaling on hepatocytes. The sequence is that of Growth/differentiation factor 15 from Homo sapiens (Human).